An 807-amino-acid polypeptide reads, in one-letter code: Leucine--tRNA ligase (807 aa).

The 'HIGH' region signature appears at Pro40–His51. The 'KMSKS' region signature appears at Lys576–Ser580. Lys579 lines the ATP pocket.

This sequence belongs to the class-I aminoacyl-tRNA synthetase family.

It localises to the cytoplasm. It carries out the reaction tRNA(Leu) + L-leucine + ATP = L-leucyl-tRNA(Leu) + AMP + diphosphate. This Pelodictyon phaeoclathratiforme (strain DSM 5477 / BU-1) protein is Leucine--tRNA ligase.